Consider the following 478-residue polypeptide: Proline--tRNA ligase (478 aa).

This sequence belongs to the class-II aminoacyl-tRNA synthetase family. ProS type 3 subfamily. As to quaternary structure, homodimer.

It is found in the cytoplasm. The enzyme catalyses tRNA(Pro) + L-proline + ATP = L-prolyl-tRNA(Pro) + AMP + diphosphate. Functionally, catalyzes the attachment of proline to tRNA(Pro) in a two-step reaction: proline is first activated by ATP to form Pro-AMP and then transferred to the acceptor end of tRNA(Pro). The sequence is that of Proline--tRNA ligase from Clostridium novyi (strain NT).